The sequence spans 767 residues: Protein NLP3 (767 aa).

3 disordered regions span residues 462 to 494, 590 to 622, and 646 to 672; these read ATPPLTQEDPKGKQVSFSFSSASSLENRKRKTK, INPTQTVHVPPKSPPSSSGSQSSSGSSTCCSSE, and HEDQRPVRVTSSLPPLPSATTPRKAKD. The RWP-RK domain maps to 482 to 566; that stretch reads SASSLENRKR…MDSVEGVQGS (85 aa). The stretch at 485-506 forms a coiled coil; that stretch reads SLENRKRKTKAEKDITLDTLRQ. Low complexity-rich tracts occupy residues 604–622 and 655–667; these read PSSSGSQSSSGSSTCCSSE and TSSLPPLPSATTP. One can recognise a PB1 domain in the interval 673–759; that stretch reads GMKVKAMFGD…ETIRILVHHP (87 aa).

It localises to the nucleus. Its function is as follows. Probable transcription factor. The chain is Protein NLP3 (NLP3) from Arabidopsis thaliana (Mouse-ear cress).